A 1293-amino-acid chain; its full sequence is Period circadian protein homolog 1 (1293 aa).

Residues M1–T134 form a disordered region. An interaction with BTRC region spans residues M1 to P151. Composition is skewed to low complexity over residues N48–S57 and G64–E115. Over residues Q116–A132 the composition is skewed to polar residues. Phosphothreonine; by CSNK1E is present on T121. 2 positions are modified to phosphoserine; by CSNK1E: S122 and S126. Positions L138 to L147 match the Nuclear export signal 1 motif. PAS domains are found at residues I208–L275 and Y348–Q414. The PAC domain occupies H422–P465. A Nuclear export signal 2 motif is present at residues L489 to L498. Disordered regions lie at residues L509 to V544 and T647 to V697. 2 stretches are compositionally biased toward low complexity: residues G513–G533 and A652–A661. A required for phosphorylation by CSNK1E region spans residues E596–S814. Residues S660, S662, and S703 each carry the phosphoserine modification. 4 disordered regions span residues G748–A771, T808–T870, S935–F1094, and S1204–S1293. A compositionally biased stretch (pro residues) spans A750–A768. Position 814 is a phosphoserine (S814). The short motif at I823 to R839 is the Nuclear localization signal element. A compositionally biased stretch (basic residues) spans G826–T843. 2 stretches are compositionally biased toward pro residues: residues S856–T870 and P952–P962. Residues L969–L982 are compositionally biased toward polar residues. Phosphoserine is present on residues S975 and S976. Positions L978–L985 match the Nuclear export signal 3 motif. Low complexity predominate over residues L1032–S1058. An LXXLL motif is present at residues L1039–L1043. Over residues L1059–E1073 the composition is skewed to gly residues. A compositionally biased stretch (low complexity) spans G1074–S1091. Positions S1145–S1293 are CRY binding domain. Gly residues predominate over residues G1232–D1250. Positions A1255 to S1269 are enriched in polar residues.

In terms of assembly, homodimer. Component of the circadian core oscillator, which includes the CRY proteins, CLOCK or NPAS2, BMAL1 or BMAL2, CSNK1D and/or CSNK1E, TIMELESS, and the PER proteins. Interacts directly with TIMELESS, PER2, PER3, CRY1 and CRY2. Interacts with BMAL1 and CLOCK. Interacts with GPRASP1. Interacts (phosphorylated) with BTRC and FBXW11; the interactions trigger proteasomal degradation. Interacts with NONO and WDR5. Interacts with SFPQ. Interacts with USP2. Interacts with HNF4A. Post-translationally, phosphorylated on serine residues by CSNK1D, CSNK1E and probably also by CSNK1G2. Phosphorylation by CSNK1D or CSNK1E promotes nuclear location of PER proteins as well as ubiquitination and subsequent degradation. May be dephosphorylated by PP1. Ubiquitinated; requires phosphorylation by CSNK1E and interaction with BTRC and FBXW11. Deubiquitinated by USP2. In terms of tissue distribution, expressed in pancreas. In the CNS, highly expressed in the SCN, internal granular layer of granular cells of the olfactory bulb, tuberculum olfactorium, piriform cortex, gyrus dentatus of the hippocampus, cerebellum, pars tuberalis/median eminence, and pituitary, and moderately in the tenia tecta, caudate putamen, accumbens nucleus, spinal cord, superior and inferior colliculus and pineal gland.

It is found in the nucleus. It localises to the cytoplasm. In terms of biological role, transcriptional repressor which forms a core component of the circadian clock. The circadian clock, an internal time-keeping system, regulates various physiological processes through the generation of approximately 24 hour circadian rhythms in gene expression, which are translated into rhythms in metabolism and behavior. It is derived from the Latin roots 'circa' (about) and 'diem' (day) and acts as an important regulator of a wide array of physiological functions including metabolism, sleep, body temperature, blood pressure, endocrine, immune, cardiovascular, and renal function. Consists of two major components: the central clock, residing in the suprachiasmatic nucleus (SCN) of the brain, and the peripheral clocks that are present in nearly every tissue and organ system. Both the central and peripheral clocks can be reset by environmental cues, also known as Zeitgebers (German for 'timegivers'). The predominant Zeitgeber for the central clock is light, which is sensed by retina and signals directly to the SCN. The central clock entrains the peripheral clocks through neuronal and hormonal signals, body temperature and feeding-related cues, aligning all clocks with the external light/dark cycle. Circadian rhythms allow an organism to achieve temporal homeostasis with its environment at the molecular level by regulating gene expression to create a peak of protein expression once every 24 hours to control when a particular physiological process is most active with respect to the solar day. Transcription and translation of core clock components (CLOCK, NPAS2, BMAL1, BMAL2, PER1, PER2, PER3, CRY1 and CRY2) plays a critical role in rhythm generation, whereas delays imposed by post-translational modifications (PTMs) are important for determining the period (tau) of the rhythms (tau refers to the period of a rhythm and is the length, in time, of one complete cycle). A diurnal rhythm is synchronized with the day/night cycle, while the ultradian and infradian rhythms have a period shorter and longer than 24 hours, respectively. Disruptions in the circadian rhythms contribute to the pathology of cardiovascular diseases, cancer, metabolic syndromes and aging. A transcription/translation feedback loop (TTFL) forms the core of the molecular circadian clock mechanism. Transcription factors, CLOCK or NPAS2 and BMAL1 or BMAL2, form the positive limb of the feedback loop, act in the form of a heterodimer and activate the transcription of core clock genes and clock-controlled genes (involved in key metabolic processes), harboring E-box elements (5'-CACGTG-3') within their promoters. The core clock genes: PER1/2/3 and CRY1/2 which are transcriptional repressors form the negative limb of the feedback loop and interact with the CLOCK|NPAS2-BMAL1|BMAL2 heterodimer inhibiting its activity and thereby negatively regulating their own expression. This heterodimer also activates nuclear receptors NR1D1/2 and RORA/B/G, which form a second feedback loop and which activate and repress BMAL1 transcription, respectively. Regulates circadian target genes expression at post-transcriptional levels, but may not be required for the repression at transcriptional level. Controls PER2 protein decay. Represses CRY2 preventing its repression on CLOCK/BMAL1 target genes such as FXYD5 and SCNN1A in kidney and PPARA in liver. Besides its involvement in the maintenance of the circadian clock, has an important function in the regulation of several processes. Participates in the repression of glucocorticoid receptor NR3C1/GR-induced transcriptional activity by reducing the association of NR3C1/GR to glucocorticoid response elements (GREs) by BMAL1:CLOCK. Plays a role in the modulation of the neuroinflammatory state via the regulation of inflammatory mediators release, such as CCL2 and IL6. In spinal astrocytes, negatively regulates the MAPK14/p38 and MAPK8/JNK MAPK cascades as well as the subsequent activation of NFkappaB. Coordinately regulates the expression of multiple genes that are involved in the regulation of renal sodium reabsorption. Can act as gene expression activator in a gene and tissue specific manner, in kidney enhances WNK1 and SLC12A3 expression in collaboration with CLOCK. Modulates hair follicle cycling. Represses the CLOCK-BMAL1 induced transcription of BHLHE40/DEC1. This Rattus norvegicus (Rat) protein is Period circadian protein homolog 1.